The sequence spans 478 residues: D-ribulose kinase (478 aa).

A chloroplast-targeting transit peptide spans 1–38 (MLILRQFQISSFELFQSPKQTGFYSSSRSVPLPRTRFY). Substrate is bound by residues D60, 64 to 67 (SGGR), and D278. ATP contacts are provided by residues S300, G338, and 433 to 437 (GGAKN).

This sequence belongs to the FGGY kinase family. The cofactor is a divalent metal cation.

Its subcellular location is the plastid. The protein resides in the chloroplast. The enzyme catalyses D-ribulose + ATP = D-ribulose 5-phosphate + ADP + H(+). Functionally, exhibits ATP hydrolysis without substrate. Can phosphorylate D-ribulose with low efficiency. In Arabidopsis thaliana (Mouse-ear cress), this protein is D-ribulose kinase.